The primary structure comprises 264 residues: Indole-3-glycerol phosphate synthase (264 aa).

This sequence belongs to the TrpC family.

It carries out the reaction 1-(2-carboxyphenylamino)-1-deoxy-D-ribulose 5-phosphate + H(+) = (1S,2R)-1-C-(indol-3-yl)glycerol 3-phosphate + CO2 + H2O. It participates in amino-acid biosynthesis; L-tryptophan biosynthesis; L-tryptophan from chorismate: step 4/5. The chain is Indole-3-glycerol phosphate synthase from Stenotrophomonas maltophilia (strain R551-3).